A 1412-amino-acid chain; its full sequence is Ecdysone-induced protein 75B, isoform B (1412 aa).

Residues 1–14 (MEAVQAAAAATSSG) show a composition bias toward low complexity. 4 disordered regions span residues 1–96 (MEAV…PGGT), 110–204 (QRAT…QQHV), 258–298 (QYQQ…VPPP), and 321–448 (HFQQ…SIPD). A compositionally biased stretch (gly residues) spans 15 to 25 (GSSGSVPGSGS). The segment covering 32 to 57 (IKTEPIDFEMLHLEENERQQDIEREP) has biased composition (basic and acidic residues). Over residues 58–68 (SSSNSNSNSNS) the composition is skewed to low complexity. Residues 69-81 (LTPQRYTHVQVQT) are compositionally biased toward polar residues. Residues 87 to 96 (PTGLTTPGGT) show a composition bias toward low complexity. Residues 124–133 (YSQQQGTAAS) are compositionally biased toward polar residues. Residues 135-150 (SAPPETTALLTTTSGT) are compositionally biased toward low complexity. Over residues 151-164 (PQIIITRTLPSNQH) the composition is skewed to polar residues. Over residues 177–203 (HHYQQQQPQRQQSPPPLHHQQQQQQQH) the composition is skewed to low complexity. A compositionally biased stretch (pro residues) spans 266–284 (PLAPPPPPPPPPPPPPPPQ). Composition is skewed to low complexity over residues 323–371 (QQQQ…SSHI), 378–403 (SSSS…NSVM), and 417–447 (ASSS…SSIP). The nuclear receptor DNA-binding region spans 455 to 531 (TVLCRVCGDK…VGMSRDAVRF (77 aa)). NR C4-type zinc fingers lie at residues 458–478 (CRVC…CEGC) and 495–514 (CTKN…CQYC). The NR LBD domain maps to 565–813 (DQPRLLAAVL…QQMWSMEDGN (249 aa)). 6 disordered regions span residues 837–878 (KSPL…SALA), 984–1021 (LDSP…SVDD), 1044–1064 (VSVS…KRQI), 1108–1174 (AEAD…SSHS), 1204–1317 (ENST…SNSA), and 1368–1401 (VTVT…NPGL). Composition is skewed to low complexity over residues 854–866 (GSPS…GVSL), 1005–1017 (SSGG…SPRS), 1044–1058 (VSVS…STSS), 1110–1155 (ADAS…AQSQ), and 1163–1174 (SSPKASMASSHS). Polar residues-rich tracts occupy residues 1206–1219 (STAA…VGNR) and 1231–1253 (AVQN…QRQQ). Low complexity-rich tracts occupy residues 1254 to 1290 (SVSP…SASS), 1299 to 1317 (STSN…SNSA), and 1372 to 1400 (ASNG…PNPG).

It belongs to the nuclear hormone receptor family. NR1 subfamily.

The protein resides in the nucleus. Implicated in the regulation of ecdysone-triggered gene hierarchies. Probably plays a key role in mediating the regulation of the larval molt by 20-OH-ecdysone. This chain is Ecdysone-induced protein 75B, isoform B (Eip75B), found in Drosophila melanogaster (Fruit fly).